The sequence spans 426 residues: Formyl-CoA:oxalate CoA-transferase (426 aa).

CoA-binding positions include 17 to 18, Arg-38, 72 to 75, 96 to 98, Arg-104, and 136 to 139; these read QS, LDTK, NFG, and KVYE. The Nucleophile role is filled by Asp-168. 247 to 249 contributes to the substrate binding site; sequence GGQ.

Belongs to the CoA-transferase III family. Frc subfamily. As to quaternary structure, homodimer.

The catalysed reaction is formyl-CoA + oxalate = oxalyl-CoA + formate. It functions in the pathway metabolic intermediate degradation; oxalate degradation; CO(2) and formate from oxalate: step 1/2. Functionally, involved in the catabolism of oxalate and in the adapatation to low pH via the induction of the oxalate-dependent acid tolerance response (ATR). Catalyzes the transfer of the CoA moiety from formyl-CoA to oxalate. The protein is Formyl-CoA:oxalate CoA-transferase of Rhodopseudomonas palustris (strain BisB18).